The following is a 694-amino-acid chain: uncharacterized protein (694 aa).

A Resolvase/invertase-type recombinase catalytic domain is found at Asp-17 to Gly-168. Catalysis depends on Ser-25, which acts as the O-(5'-phospho-DNA)-serine intermediate. Residues Pro-175–Gly-316 constitute a DNA-binding region (recombinase). The chain crosses the membrane as a helical span at residues Ala-386–Val-406.

It is found in the membrane. This is an uncharacterized protein from Sinorhizobium fredii (strain NBRC 101917 / NGR234).